The following is a 770-amino-acid chain: MVNKEQFYDQIRKALEDGNTRYYRNLIYIERDDYFDHVKEIISLFLNFKSNPSVAYGFVPWASGSKERMRTIKEYFSKFDDIDYANAEYYLGNTYDLVILDTVDNFQPINIGRLVDLARGGGLIIIYTNNLIKDKTFRTSIMRNGLILDEYEKRFKRKLYEHEGIFIIDVNEYIPKPFSGNTMPKAEKKVPRNPLMPKEIHELSLSEDQNRVIESFTYLLSGGQRALVLTAARGRGKSAATGLSIAGLIEKLRERKEKSIRIIVTAPSIASASQVMSFAKLGLEALGEELSVKVSDTGHIKSLRGDYFKLEYVPPDAAIEDEGELLIIDEAAALGINYIDLALRAWKKVALVTTVHGYEGSNKAFLRYLRRLIESKRIRVKWVNMEQPLRYAKGDPIEKWLYDALLLDAEPSEPQYLNDTMIYEDVDKSELANDDNRLRAIYGIMVTAHYKNNPDDLMIMLDGIHHKIKAIRIGENSYIAACQIAEEGELSDNMVDIALKGGTFDGDLIPDRIIKHVRIKDFAKLRGWRIVRIAVAPELQDKGFGSELLKMIYEEARDKGVDWVGSSFMSDQKVLNFWIKNGFIPVHISPKKNEKLGDYPVVVIRPISDIATKIVKISAYMLKEKLLNTLHDVYFNMNPEVVRLMLTSTKIVSKTINVSPIILDKTISFLQGVSPYESSADGIHMLTLKYFWDGERDWSLTQDEELVLIAKVLQGKPWSYVSTVLSSNRTHIYELIYSAISKLMKKYYNLTADSKVGLTLKDVMNSQQYD.

Residues Gln209 and Arg390 each coordinate ATP. In terms of domain architecture, N-acetyltransferase spans Met458–Ser608. Ile533 to Val535 provides a ligand contact to acetyl-CoA.

It belongs to the TmcA family.

The protein localises to the cytoplasm. The catalysed reaction is cytidine(34) in elongator tRNA(Met) + acetyl-CoA + ATP + H2O = N(4)-acetylcytidine(34) in elongator tRNA(Met) + ADP + phosphate + CoA + H(+). It catalyses the reaction a cytidine in RNA + acetyl-CoA + ATP + H2O = an N(4)-acetylcytidine in RNA + ADP + phosphate + CoA + H(+). The enzyme catalyses a cytidine in tRNA + acetyl-CoA + ATP + H2O = an N(4)-acetylcytidine in tRNA + ADP + phosphate + CoA + H(+). It carries out the reaction a cytidine in mRNA + acetyl-CoA + ATP + H2O = an N(4)-acetylcytidine in mRNA + ADP + phosphate + CoA + H(+). In terms of biological role, catalyzes the formation of N(4)-acetylcytidine (ac(4)C) at the wobble position of tRNA(Met), by using acetyl-CoA as an acetyl donor and ATP (or GTP). Catalyzes the formation of 41 N(4)-acetylcytidine (ac(4)C) sites in RNA, almost always on the middle C of a CCG motif. Modifications are found mostly in tRNA, with small amounts found in rRNA and mRNA. The sequence is that of tRNA(Met) cytidine acetyltransferase TmcA 2 from Saccharolobus solfataricus (strain ATCC 35092 / DSM 1617 / JCM 11322 / P2) (Sulfolobus solfataricus).